A 328-amino-acid polypeptide reads, in one-letter code: Ribosomal RNA small subunit methyltransferase C (328 aa).

Belongs to the methyltransferase superfamily. RsmC family. Monomer.

The protein localises to the cytoplasm. The enzyme catalyses guanosine(1207) in 16S rRNA + S-adenosyl-L-methionine = N(2)-methylguanosine(1207) in 16S rRNA + S-adenosyl-L-homocysteine + H(+). Specifically methylates the guanine in position 1207 of 16S rRNA in the 30S particle. This Pasteurella multocida (strain Pm70) protein is Ribosomal RNA small subunit methyltransferase C.